A 110-amino-acid polypeptide reads, in one-letter code: Late cornified envelope protein 2C (110 aa).

A compositionally biased stretch (low complexity) spans 1-10 (MSCQQNQQQC). The interval 1 to 23 (MSCQQNQQQCQPPPKCPPKCTPK) is disordered. Pro residues predominate over residues 11-23 (QPPPKCPPKCTPK).

This sequence belongs to the LCE family. As to quaternary structure, interacts with CYSRT1; the interaction is direct. As to expression, skin-specific. Expression was readily detected in adult trunk skin, adult arm skin, fetal skin, penal skin, vulva, esophagus and tongue. Not expressed in the cervix, rectum, lung, colon, or placenta.

Functionally, precursors of the cornified envelope of the stratum. This is Late cornified envelope protein 2C (LCE2C) from Homo sapiens (Human).